The primary structure comprises 411 residues: Growth-regulating factor 7 (411 aa).

Residues 38–73 (PFTPTQWMELEHQALIYKHIVANAPVPAGLLLPIRR) form the QLQ domain. The region spanning 108–152 (DSEPGRCRRTDGKKWRCSRDAVVDQKYCERHINRGRHRSRKHVEG) is the WRC domain. 2 consecutive short sequence motifs (bipartite nuclear localization signal) follow at residues 113–123 (RCRRTDGKKWR) and 141–148 (RGRHRSRK). The interval 333 to 369 (FFTNTSSASDDKGKSRHPPSLNLLADGHTTSPQLQSP) is disordered. Residues 360-369 (HTTSPQLQSP) show a composition bias toward polar residues.

Belongs to the GRF family.

The protein resides in the nucleus. In terms of biological role, transcription activator that plays a regulatory role in gibberellin-induced stem elongation. The chain is Growth-regulating factor 7 (GRF7) from Oryza sativa subsp. japonica (Rice).